The following is a 368-amino-acid chain: Protein RecA (368 aa).

72–79 (GNESSGKT) provides a ligand contact to ATP.

Belongs to the RecA family.

The protein resides in the cytoplasm. Can catalyze the hydrolysis of ATP in the presence of single-stranded DNA, the ATP-dependent uptake of single-stranded DNA by duplex DNA, and the ATP-dependent hybridization of homologous single-stranded DNAs. It interacts with LexA causing its activation and leading to its autocatalytic cleavage. The protein is Protein RecA of Petrotoga mobilis (strain DSM 10674 / SJ95).